A 562-amino-acid polypeptide reads, in one-letter code: Glutamate--tRNA ligase (562 aa).

Residues Pro101 to His111 carry the 'HIGH' region motif.

This sequence belongs to the class-I aminoacyl-tRNA synthetase family. Glutamate--tRNA ligase type 2 subfamily.

It localises to the cytoplasm. The catalysed reaction is tRNA(Glu) + L-glutamate + ATP = L-glutamyl-tRNA(Glu) + AMP + diphosphate. Functionally, catalyzes the attachment of glutamate to tRNA(Glu) in a two-step reaction: glutamate is first activated by ATP to form Glu-AMP and then transferred to the acceptor end of tRNA(Glu). The chain is Glutamate--tRNA ligase from Cenarchaeum symbiosum (strain A).